The following is a 189-amino-acid chain: Crossover junction endodeoxyribonuclease RuvC (189 aa).

Active-site residues include aspartate 7, glutamate 68, and aspartate 141. 3 residues coordinate Mg(2+): aspartate 7, glutamate 68, and aspartate 141.

It belongs to the RuvC family. Homodimer which binds Holliday junction (HJ) DNA. The HJ becomes 2-fold symmetrical on binding to RuvC with unstacked arms; it has a different conformation from HJ DNA in complex with RuvA. In the full resolvosome a probable DNA-RuvA(4)-RuvB(12)-RuvC(2) complex forms which resolves the HJ. It depends on Mg(2+) as a cofactor.

The protein localises to the cytoplasm. It carries out the reaction Endonucleolytic cleavage at a junction such as a reciprocal single-stranded crossover between two homologous DNA duplexes (Holliday junction).. The RuvA-RuvB-RuvC complex processes Holliday junction (HJ) DNA during genetic recombination and DNA repair. Endonuclease that resolves HJ intermediates. Cleaves cruciform DNA by making single-stranded nicks across the HJ at symmetrical positions within the homologous arms, yielding a 5'-phosphate and a 3'-hydroxyl group; requires a central core of homology in the junction. The consensus cleavage sequence is 5'-(A/T)TT(C/G)-3'. Cleavage occurs on the 3'-side of the TT dinucleotide at the point of strand exchange. HJ branch migration catalyzed by RuvA-RuvB allows RuvC to scan DNA until it finds its consensus sequence, where it cleaves and resolves the cruciform DNA. The chain is Crossover junction endodeoxyribonuclease RuvC from Rhodococcus jostii (strain RHA1).